Reading from the N-terminus, the 120-residue chain is MNATFLNHSGLEEVDGVGGGAGAALGNRTHGLGTWLGCCPGGAPLAASDGVPAGLAPDERSLWVSRVAQIAVLCVLSLTVVFGVFFLGCNLLIKSESMINFLVQERRPSKDVGAAILGLY.

Residues 67–87 (VAQIAVLCVLSLTVVFGVFFL) traverse the membrane as a helical segment. Serine 109 carries the phosphoserine modification.

Belongs to the reprimo family.

It localises to the membrane. The chain is Reprimo-like protein (RPRML) from Homo sapiens (Human).